The primary structure comprises 137 residues: Flavodoxin (137 aa).

Residues 2 to 137 enclose the Flavodoxin-like domain; the sequence is VEIVYWSGTG…KELGEAAAKA (136 aa).

Belongs to the flavodoxin family. The cofactor is FMN.

Its function is as follows. Low-potential electron donor to a number of redox enzymes. In Megasphaera elsdenii, this protein is Flavodoxin.